The following is a 322-amino-acid chain: Protein-L-isoaspartate O-methyltransferase (322 aa).

Positions 1-101 are disordered; it reads MSGERAKRFP…AKQGDRSAAP (101 aa). Residues 14-29 show a composition bias toward basic and acidic residues; sequence EDLKREPRKPEGRVAE. Composition is skewed to low complexity over residues 33–51 and 76–91; these read AGDAARQRLTAAAAVPAAA and HAPAAPGAAKRAPQGG. The active site involves serine 170.

It belongs to the methyltransferase superfamily. L-isoaspartyl/D-aspartyl protein methyltransferase family.

The protein resides in the cytoplasm. The enzyme catalyses [protein]-L-isoaspartate + S-adenosyl-L-methionine = [protein]-L-isoaspartate alpha-methyl ester + S-adenosyl-L-homocysteine. Catalyzes the methyl esterification of L-isoaspartyl residues in peptides and proteins that result from spontaneous decomposition of normal L-aspartyl and L-asparaginyl residues. It plays a role in the repair and/or degradation of damaged proteins. This chain is Protein-L-isoaspartate O-methyltransferase, found in Burkholderia pseudomallei (strain 1106a).